Reading from the N-terminus, the 324-residue chain is Myoblast determination protein 1 homolog (324 aa).

The disordered stretch occupies residues V125–R146. Residues D155–L206 form the bHLH domain. A disordered region spans residues Y251–H272. Acidic residues predominate over residues M256–D267.

In terms of assembly, efficient DNA binding requires dimerization with another bHLH protein. Body wall muscle cells; in clonal muscle precursors, in a set of early embryonic blastomeres (the ms-granddaughters), and in six glial-like cells called GLRS.

Its subcellular location is the nucleus. Its function is as follows. Involved in myogenesis, in cooperation with transcription factors unc-120 and hnd-1. Acts redundantly with fozi-1 to promote body wall muscle cell and coelomocyte specification in postembryonic mesoderm progenitors, probably through suppression of sem-2. In Caenorhabditis elegans, this protein is Myoblast determination protein 1 homolog.